Reading from the N-terminus, the 54-residue chain is Protein YojO (54 aa).

This sequence belongs to the YojO family.

The chain is Protein YojO (yojO) from Escherichia coli (strain K12).